Reading from the N-terminus, the 589-residue chain is Phosphoenolpyruvate carboxykinase [GTP] (589 aa).

Substrate contacts are provided by residues Arg-75 and Tyr-207–Gly-209. Mn(2+) is bound by residues Lys-216 and His-236. Residue Ser-258 coordinates substrate. Residue Ala-259–Asn-264 coordinates GTP. Residue Ser-260 is part of the active site. Asp-287 serves as a coordination point for Mn(2+). Residue Asn-374–Arg-376 participates in substrate binding. GTP is bound by residues Arg-376, Arg-407, and Phe-500 to Asn-503.

This sequence belongs to the phosphoenolpyruvate carboxykinase [GTP] family. It depends on Mn(2+) as a cofactor.

Its subcellular location is the cytoplasm. The catalysed reaction is oxaloacetate + GTP = phosphoenolpyruvate + GDP + CO2. The protein operates within carbohydrate biosynthesis; gluconeogenesis. Catalyzes the conversion of oxaloacetate (OAA) to phosphoenolpyruvate (PEP), the rate-limiting step in the metabolic pathway that produces glucose from lactate and other precursors derived from the citric acid cycle. The polypeptide is Phosphoenolpyruvate carboxykinase [GTP] (Thermoplasma volcanium (strain ATCC 51530 / DSM 4299 / JCM 9571 / NBRC 15438 / GSS1)).